The chain runs to 379 residues: Pectin lyase A (379 aa).

The signal sequence occupies residues methionine 1–alanine 20. 2 disulfide bridges follow: cysteine 83-cysteine 102 and cysteine 92-cysteine 226. A glycan (O-linked (Man) threonine) is linked at threonine 88. N-linked (GlcNAc...) asparagine glycosylation is present at asparagine 129. Arginine 256 is an active-site residue. Cysteine 322 and cysteine 330 form a disulfide bridge. An O-linked (Man) serine; in strain 4M-147 glycan is attached at serine 368.

It belongs to the polysaccharide lyase 1 family. N-glycosylated at Asn-129 and O-glycosylated at Thr-88 when expressed in Aspergillus nidulans. The protein from strain 4M-147 is O-glycosylated at Thr-88 and Ser-368. PubMed:9195887 modeled GalNAc at the O-glycosylation site, a glycosylation not observed in fungi. The O-linked saccharide is probably mannose.

The protein localises to the secreted. It catalyses the reaction Eliminative cleavage of (1-&gt;4)-alpha-D-galacturonan methyl ester to give oligosaccharides with 4-deoxy-6-O-methyl-alpha-D-galact-4-enuronosyl groups at their non-reducing ends.. Functionally, pectinolytic enzymes consist of four classes of enzymes: pectin lyase, polygalacturonase, pectin methylesterase and rhamnogalacturonase. Among pectinolytic enzymes, pectin lyase is the most important in depolymerization of pectin, since it cleaves internal glycosidic bonds of highly methylated pectins. The protein is Pectin lyase A (pelA) of Aspergillus niger.